We begin with the raw amino-acid sequence, 303 residues long: Signal recognition particle receptor FtsY (303 aa).

Residues 108 to 115 (GVNGAGKT), 190 to 194 (DTAGR), and 254 to 257 (TKLD) contribute to the GTP site.

This sequence belongs to the GTP-binding SRP family. FtsY subfamily. Part of the signal recognition particle protein translocation system, which is composed of SRP and FtsY. SRP is a ribonucleoprotein composed of Ffh and a 4.5S RNA molecule.

The protein localises to the cell inner membrane. It localises to the cytoplasm. The catalysed reaction is GTP + H2O = GDP + phosphate + H(+). Involved in targeting and insertion of nascent membrane proteins into the cytoplasmic membrane. Acts as a receptor for the complex formed by the signal recognition particle (SRP) and the ribosome-nascent chain (RNC). Interaction with SRP-RNC leads to the transfer of the RNC complex to the Sec translocase for insertion into the membrane, the hydrolysis of GTP by both Ffh and FtsY, and the dissociation of the SRP-FtsY complex into the individual components. This Rickettsia felis (strain ATCC VR-1525 / URRWXCal2) (Rickettsia azadi) protein is Signal recognition particle receptor FtsY.